Consider the following 516-residue polypeptide: D-aminopeptidase (516 aa).

The active-site Nucleophile is Ser61. Lys64 functions as the Proton donor/acceptor in the catalytic mechanism. The tract at residues 476 to 486 (RRSMDAPAPGD) is important for specificity. Asp480 contributes to the substrate binding site.

This sequence belongs to the peptidase S12 family. In terms of assembly, homodimer.

The enzyme catalyses Release of an N-terminal D-amino acid from a peptide, Xaa-|-Yaa-, in which Xaa is preferably D-Ala, D-Ser or D-Thr. D-amino acid amides and methyl esters also are hydrolyzed, as is glycine amide.. Its activity is regulated as follows. Inhibited by beta-lactam compounds such as 6-aminopenicillic acid, 7-aminocephalosporanic acid, benzylpenicillin and ampicillin. Inhibited by p-chloromercuribenzoate. In terms of biological role, hydrolyzes N-terminal residues in D-amino acid-containing peptides. This Cereibacter sphaeroides (strain ATCC 17023 / DSM 158 / JCM 6121 / CCUG 31486 / LMG 2827 / NBRC 12203 / NCIMB 8253 / ATH 2.4.1.) (Rhodobacter sphaeroides) protein is D-aminopeptidase.